We begin with the raw amino-acid sequence, 603 residues long: UvrABC system protein C (603 aa).

A GIY-YIG domain is found at 15 to 92 (DQPGCYLMKN…IQKHQPYYNI (78 aa)). In terms of domain architecture, UVR spans 197-232 (AQVKKQLTARMERAAGQLEFERAAEIRDQLHYIEVT).

It belongs to the UvrC family. Interacts with UvrB in an incision complex.

The protein resides in the cytoplasm. The UvrABC repair system catalyzes the recognition and processing of DNA lesions. UvrC both incises the 5' and 3' sides of the lesion. The N-terminal half is responsible for the 3' incision and the C-terminal half is responsible for the 5' incision. The polypeptide is UvrABC system protein C (Limosilactobacillus fermentum (strain NBRC 3956 / LMG 18251) (Lactobacillus fermentum)).